Consider the following 566-residue polypeptide: Glucose-6-phosphate isomerase, cytosolic (566 aa).

The active-site Proton donor is glutamate 360. Residues histidine 391 and lysine 516 contribute to the active site.

The protein belongs to the GPI family. As to quaternary structure, homodimer.

The protein localises to the cytoplasm. It carries out the reaction alpha-D-glucose 6-phosphate = beta-D-fructose 6-phosphate. It participates in carbohydrate degradation; glycolysis; D-glyceraldehyde 3-phosphate and glycerone phosphate from D-glucose: step 2/4. This is Glucose-6-phosphate isomerase, cytosolic (PGIC) from Spinacia oleracea (Spinach).